A 51-amino-acid polypeptide reads, in one-letter code: MPSQKSFRTKQKLAKAQKQNRPLPQWIRLRTDNKIRYNAKRRHWRRTKLGI.

A disordered region spans residues 1–23 (MPSQKSFRTKQKLAKAQKQNRPL).

The protein belongs to the eukaryotic ribosomal protein eL39 family. Component of the large ribosomal subunit. Mature ribosomes consist of a small (40S) and a large (60S) subunit. The 40S subunit contains about 32 different proteins and 1 molecule of RNA (18S). The 60S subunit contains 45 different proteins and 3 molecules of RNA (25S, 5.8S and 5S).

The protein resides in the cytoplasm. Its function is as follows. Component of the ribosome, a large ribonucleoprotein complex responsible for the synthesis of proteins in the cell. The small ribosomal subunit (SSU) binds messenger RNAs (mRNAs) and translates the encoded message by selecting cognate aminoacyl-transfer RNA (tRNA) molecules. The large subunit (LSU) contains the ribosomal catalytic site termed the peptidyl transferase center (PTC), which catalyzes the formation of peptide bonds, thereby polymerizing the amino acids delivered by tRNAs into a polypeptide chain. The nascent polypeptides leave the ribosome through a tunnel in the LSU and interact with protein factors that function in enzymatic processing, targeting, and the membrane insertion of nascent chains at the exit of the ribosomal tunnel. This is Large ribosomal subunit protein eL39 from Candida albicans (strain SC5314 / ATCC MYA-2876) (Yeast).